The following is a 794-amino-acid chain: MANTTLTLDIIGMTCAACSNRIEKKLNRMNHVQAKVNLTTEKATIDYESDDYHLEDFVEQIQSLGYDVAVEQVELNINGMTCAACSNRIEKVLNQTQGVQQATVNLTTEQALIKYYPSATNTEALIKRIQNIGYDAETKTSSKAQSNRKKQELKHKRNKLIISAILSLPLLLVMVVHISPISIPSILVNPWVQLILSTPVQFIIGWQFYVGAYKNLRNGSANMDVLVAVGTSAAYFYSIYEMMMWLTHQTHHPHLYFETSAILITLILLGKYLEARAKSQTTNALSELLNLQAKEARVIKENKEIMLPLDKVKVGDTLLIKPGEKIPVDGKVTKGDTSIDESMLTGESIPVEKSSGDSVIGSTMNKNGSIMIEATQVGGDTALSHIIKVVEDAQSSKAPIQRLADIISGYFVPIVVSIAVITFIIWIIFVHPGQFEPALVSAISVLVIACPCALGLATPTSIMVGTGRAAENGILFKGGQFVERAHYVDTIVLDKTGTITNGQPVVTDYVGDNDTLQLLASAENASEHPLADAIVTYAKDKGLNLLDNDTFKSIPGHGIKATIHQQQILVGNRKLMNDYNISISNKLNDQLNHYEHLGQTAMMIAVDNQINGIIAVADTVKNDAKQAIKELRNMNIDVVMLTGDNNRTAQTIAKQVGIEHVIAEVLPEEKAHQISLLQDKGKQVAMVGDGINDAPALVKADIGMAIGTGAEVAIEAADITILGGDLLLVPKAIKASKATIKNIRQNLFWAFGYNVAGIPIAACGLLAPWIAGAAMALSSVSVVMNALRLKKMKL.

HMA domains lie at 4-69 (TTLT…YDVA) and 71-137 (EQVE…YDAE). Residues Cys15, Cys18, Cys82, and Cys85 each coordinate Cu(+). Transmembrane regions (helical) follow at residues 161 to 181 (IISA…ISPI), 186 to 206 (ILVN…IIGW), 225 to 245 (VLVA…MMMW), 255 to 275 (LYFE…YLEA), 410 to 430 (YFVP…IIFV), and 437 to 457 (PALV…LGLA). Asp494 (4-aspartylphosphate intermediate) is an active-site residue. The Mg(2+) site is built by Asp689 and Asp693. Helical transmembrane passes span 747-767 (LFWA…GLLA) and 773-789 (AAMA…ALRL).

This sequence belongs to the cation transport ATPase (P-type) (TC 3.A.3) family. Type IB subfamily.

It localises to the cell membrane. It carries out the reaction Cu(+)(in) + ATP + H2O = Cu(+)(out) + ADP + phosphate + H(+). In terms of biological role, involved in copper export. The sequence is that of Copper-exporting P-type ATPase (copA) from Staphylococcus epidermidis (strain ATCC 35984 / DSM 28319 / BCRC 17069 / CCUG 31568 / BM 3577 / RP62A).